The sequence spans 85 residues: Granaticin polyketide synthase acyl carrier protein (85 aa).

Positions 3–81 constitute a Carrier domain; the sequence is RLTLDGLRTI…VLLDLVNGAQ (79 aa). S41 bears the O-(pantetheine 4'-phosphoryl)serine mark.

In terms of processing, 4'-phosphopantetheine is transferred from CoA to a specific serine of the apo-ACP-like protein.

It participates in antibiotic biosynthesis; granaticin biosynthesis. Its function is as follows. Acyl carrier protein. This is Granaticin polyketide synthase acyl carrier protein from Streptomyces violaceoruber.